The chain runs to 219 residues: MATTIEVKTPAGTTDGSVELPAELFDVEANIALMHQVVTAQLAAKRQGTHSTKTRGEVSGGGKKPYRQKGTGRARQGSTRAPQFTGGGTVHGPQPRDYSQRTPKKMIAAALRGALSDRARNGRIHAVTELVEGQTPSTKSAKAFLSTLTERKQVLVVIGRADETSERSVRNLPGVHIISPDQLNTYDVLKADDVVFSVEALNAYINAQTARTEKEGASA.

Residues 43–100 (AAKRQGTHSTKTRGEVSGGGKKPYRQKGTGRARQGSTRAPQFTGGGTVHGPQPRDYSQ) form a disordered region.

Belongs to the universal ribosomal protein uL4 family. As to quaternary structure, part of the 50S ribosomal subunit.

Its function is as follows. One of the primary rRNA binding proteins, this protein initially binds near the 5'-end of the 23S rRNA. It is important during the early stages of 50S assembly. It makes multiple contacts with different domains of the 23S rRNA in the assembled 50S subunit and ribosome. In terms of biological role, forms part of the polypeptide exit tunnel. The protein is Large ribosomal subunit protein uL4 of Mycobacterium sp. (strain JLS).